Consider the following 929-residue polypeptide: Valine--tRNA ligase (929 aa).

The 'HIGH' region signature appears at 40–50 (PNVTGHLHMGH). Residues 522–526 (KMSKS) carry the 'KMSKS' region motif. Residue K525 coordinates ATP. Positions 855 to 926 (LAGLIDKEAE…LEQQHAEITD (72 aa)) form a coiled coil.

It belongs to the class-I aminoacyl-tRNA synthetase family. ValS type 1 subfamily. In terms of assembly, monomer.

It localises to the cytoplasm. It catalyses the reaction tRNA(Val) + L-valine + ATP = L-valyl-tRNA(Val) + AMP + diphosphate. Its function is as follows. Catalyzes the attachment of valine to tRNA(Val). As ValRS can inadvertently accommodate and process structurally similar amino acids such as threonine, to avoid such errors, it has a 'posttransfer' editing activity that hydrolyzes mischarged Thr-tRNA(Val) in a tRNA-dependent manner. The chain is Valine--tRNA ligase from Nitrosococcus oceani (strain ATCC 19707 / BCRC 17464 / JCM 30415 / NCIMB 11848 / C-107).